The following is a 258-amino-acid chain: Cytochrome b-c1 complex subunit Rieske-1, mitochondrial (258 aa).

A mitochondrion-targeting transit peptide spans 1–46 (WPVRSAAPSSSAFISANHFSSDDDSSSPRSISPSLASVFLHHTRGF). The Mitochondrial matrix segment spans residues 47–95 (SSNSVSPAHDMGLVPDLPPTVAAIKNPTSKIVYDEHNHERYPPGDPSKR). A helical transmembrane segment spans residues 96 to 118 (AFAYFVLTGGRFVYASLMRLLIL). Residues 119-258 (KFVLSMSASK…FLEENKLLIG (140 aa)) lie on the Mitochondrial intermembrane side of the membrane. Residues 161–256 (RRRTEDDISL…YSFLEENKLL (96 aa)) enclose the Rieske domain. C201, H203, C220, and H223 together coordinate [2Fe-2S] cluster. C206 and C222 are oxidised to a cystine.

It belongs to the Rieske iron-sulfur protein family. As to quaternary structure, component of the ubiquinol-cytochrome c oxidoreductase (cytochrome b-c1 complex, complex III, CIII), a multisubunit enzyme composed of 3 respiratory subunits cytochrome b, cytochrome c1 and Rieske protein, 2 core protein subunits, and several low-molecular weight protein subunits. The complex exists as an obligatory dimer and forms supercomplexes (SCs) in the inner mitochondrial membrane with cytochrome c oxidase (complex IV, CIV). [2Fe-2S] cluster is required as a cofactor.

It localises to the mitochondrion inner membrane. It catalyses the reaction a quinol + 2 Fe(III)-[cytochrome c](out) = a quinone + 2 Fe(II)-[cytochrome c](out) + 2 H(+)(out). Component of the ubiquinol-cytochrome c oxidoreductase, a multisubunit transmembrane complex that is part of the mitochondrial electron transport chain which drives oxidative phosphorylation. The respiratory chain contains 3 multisubunit complexes succinate dehydrogenase (complex II, CII), ubiquinol-cytochrome c oxidoreductase (cytochrome b-c1 complex, complex III, CIII) and cytochrome c oxidase (complex IV, CIV), that cooperate to transfer electrons derived from NADH and succinate to molecular oxygen, creating an electrochemical gradient over the inner membrane that drives transmembrane transport and the ATP synthase. The cytochrome b-c1 complex catalyzes electron transfer from ubiquinol to cytochrome c, linking this redox reaction to translocation of protons across the mitochondrial inner membrane, with protons being carried across the membrane as hydrogens on the quinol. In the process called Q cycle, 2 protons are consumed from the matrix, 4 protons are released into the intermembrane space and 2 electrons are passed to cytochrome c. The Rieske protein is a catalytic core subunit containing a [2Fe-2S] iron-sulfur cluster. It cycles between 2 conformational states during catalysis to transfer electrons from the quinol bound in the Q(0) site in cytochrome b to cytochrome c1. This chain is Cytochrome b-c1 complex subunit Rieske-1, mitochondrial, found in Nicotiana tabacum (Common tobacco).